The primary structure comprises 311 residues: Exosome complex component Rrp4 (311 aa).

The S1 motif domain occupies 63–131 (GDVVIGEITD…EVKKVKLGLK (69 aa)). Residues 139-197 (RDGILVYITPTKVPRLIGKRGSMINMVKEKTHCDIVVGQNGVVWIKGEPDMERIAEKVV) enclose the KH domain. Residues 222–311 (GVEPEIQVEE…EVKDENNSER (90 aa)) form a disordered region. Acidic residues predominate over residues 241 to 300 (PESEDFEEASDYSEDVEVSPESEDIEEVSDESEDLEVESEDVEEGTDTPAAEEDDGEAGD). The span at 301 to 311 (AEVKDENNSER) shows a compositional bias: basic and acidic residues.

Belongs to the RRP4 family. Component of the archaeal exosome complex. Forms a trimer of Rrp4 and/or Csl4 subunits. The trimer associates with a hexameric ring-like arrangement composed of 3 Rrp41-Rrp42 heterodimers.

Its subcellular location is the cytoplasm. Non-catalytic component of the exosome, which is a complex involved in RNA degradation. Increases the RNA binding and the efficiency of RNA degradation. Confers strong poly(A) specificity to the exosome. The chain is Exosome complex component Rrp4 from Methanothermobacter thermautotrophicus (strain ATCC 29096 / DSM 1053 / JCM 10044 / NBRC 100330 / Delta H) (Methanobacterium thermoautotrophicum).